We begin with the raw amino-acid sequence, 338 residues long: MSKLFSEYKLKDVTLKNRIVMSPMCMYSVENKDGIATDFHFAHYVSRAAGGTGLVILEATAVQEVGRISEFDLGLWNDEQVPALKKLVGGLHYHGAKAGIQLAHAGRKAVLPGEIVAPSAIAFDEKSDKPVELTKEAIKEVVADFKRAAYRAKEAGFDVIEIHAAHGYLIHQFLSPITNRREDNYGGPAGNRYKILSDIIKAVKEVWDGPIIVRVSATDYAHGGLQLEDHIPFAKWMKADGVELIDVSTGGLVNVAPPVFPGYQVPFADEIRRGAGIATGALGLITRGEQAEEILCNERADLIIVGRELLRNPYFAKDAAKQLGETIEAPKQYSRAWK.

An FMN-binding site is contributed by 22 to 25 (SPMC). Tyrosine 27 serves as a coordination point for substrate. Positions 59 and 101 each coordinate FMN. 163 to 166 (HAAH) contributes to the substrate binding site. FMN-binding positions include arginine 214 and 306–307 (GR).

It belongs to the NADH:flavin oxidoreductase/NADH oxidase family. NamA subfamily. As to quaternary structure, homotetramer. FMN serves as cofactor.

The enzyme catalyses A + NADPH + H(+) = AH2 + NADP(+). Functionally, catalyzes the reduction of the double bond of an array of alpha,beta-unsaturated aldehydes and ketones. It also reduces the nitro group of nitroester and nitroaromatic compounds. It could have a role in detoxification processes. In Listeria monocytogenes serovar 1/2a (strain ATCC BAA-679 / EGD-e), this protein is NADPH dehydrogenase.